A 348-amino-acid chain; its full sequence is GMP reductase (348 aa).

108-131 (ADFQKTKDIMALSDELIFICVDIA) is a binding site for NADP(+). K(+) is bound by residues glycine 181 and glycine 183. Cysteine 186 acts as the Thioimidate intermediate in catalysis. 216–239 (IIGDGGCSCAGDVSKAFGGGADFV) is an NADP(+) binding site.

It belongs to the IMPDH/GMPR family. GuaC type 1 subfamily. In terms of assembly, homotetramer.

The enzyme catalyses IMP + NH4(+) + NADP(+) = GMP + NADPH + 2 H(+). In terms of biological role, catalyzes the irreversible NADPH-dependent deamination of GMP to IMP. It functions in the conversion of nucleobase, nucleoside and nucleotide derivatives of G to A nucleotides, and in maintaining the intracellular balance of A and G nucleotides. The polypeptide is GMP reductase (Vibrio parahaemolyticus serotype O3:K6 (strain RIMD 2210633)).